Consider the following 134-residue polypeptide: Small ribosomal subunit protein uS8 (134 aa).

It belongs to the universal ribosomal protein uS8 family. In terms of assembly, part of the 30S ribosomal subunit. Contacts proteins S5 and S12.

In terms of biological role, one of the primary rRNA binding proteins, it binds directly to 16S rRNA central domain where it helps coordinate assembly of the platform of the 30S subunit. In Thermotoga sp. (strain RQ2), this protein is Small ribosomal subunit protein uS8.